The sequence spans 249 residues: Transcription factor MYB90 (249 aa).

HTH myb-type domains follow at residues 5–57 and 58–112; these read SKGL…LNYL and KPSI…SKKH. 2 DNA-binding regions (H-T-H motif) span residues 33–57 and 85–108; these read WHQV…LNYL and WSLI…NTHL.

Interacts with BHLH12/MYC1, BHLH1/GL3/MYC6, BHLH2/EGL3/MYC146, and BHLH42/TT8. As to expression, expressed only in leaves and siliques.

The protein localises to the nucleus. Functionally, transcription activator, when associated with BHLH12/MYC1, EGL3, or GL3. Promotes the synthesis of phenylpropanoid-derived compounds such as anthocyanins. This Arabidopsis thaliana (Mouse-ear cress) protein is Transcription factor MYB90 (MYB90).